We begin with the raw amino-acid sequence, 483 residues long: UDP-N-acetylmuramate--L-alanine ligase (483 aa).

Residue 125-131 (GTHGKTT) coordinates ATP.

The protein belongs to the MurCDEF family.

It is found in the cytoplasm. It carries out the reaction UDP-N-acetyl-alpha-D-muramate + L-alanine + ATP = UDP-N-acetyl-alpha-D-muramoyl-L-alanine + ADP + phosphate + H(+). The protein operates within cell wall biogenesis; peptidoglycan biosynthesis. In terms of biological role, cell wall formation. This is UDP-N-acetylmuramate--L-alanine ligase from Pseudoalteromonas translucida (strain TAC 125).